A 210-amino-acid chain; its full sequence is Small ribosomal subunit protein uS3 (210 aa).

The KH type-2 domain maps to 38-106; that stretch reads LRSFLKKRLY…EVYLNIQEVR (69 aa).

Belongs to the universal ribosomal protein uS3 family. As to quaternary structure, part of the 30S ribosomal subunit. Forms a tight complex with proteins S10 and S14.

Functionally, binds the lower part of the 30S subunit head. Binds mRNA in the 70S ribosome, positioning it for translation. This chain is Small ribosomal subunit protein uS3, found in Geotalea uraniireducens (strain Rf4) (Geobacter uraniireducens).